We begin with the raw amino-acid sequence, 59 residues long: Small ribosomal subunit protein bS21 (59 aa).

Basic and acidic residues predominate over residues 32-42; the sequence is VRKREHYDKPS. Positions 32–59 are disordered; it reads VRKREHYDKPSVKRKKKAEAARRKNAKK. Residues 43 to 59 show a composition bias toward basic residues; that stretch reads VKRKKKAEAARRKNAKK.

The protein belongs to the bacterial ribosomal protein bS21 family.

This chain is Small ribosomal subunit protein bS21, found in Clostridioides difficile (strain 630) (Peptoclostridium difficile).